Reading from the N-terminus, the 1480-residue chain is Cystic fibrosis transmembrane conductance regulator (1480 aa).

Residues Met1–Phe77 are Cytoplasmic-facing. Residues Phe78–Gln98 traverse the membrane as a helical segment. Residues Phe81–Leu365 enclose the ABC transmembrane type-1 1 domain. At Pro99–Tyr122 the chain is on the extracellular side. A helical transmembrane segment spans residues Leu123 to His146. The Cytoplasmic portion of the chain corresponds to His147 to Leu195. The chain crosses the membrane as a helical span at residues Ala196–Trp216. The Extracellular portion of the chain corresponds to Glu217–Ser222. The helical transmembrane segment at Ala223–Met243 threads the bilayer. Topologically, residues Met244–Lys298 are cytoplasmic. A helical membrane pass occupies residues Ala299–Phe319. Topologically, residues Leu320–Thr339 are extracellular. Residues Ile340–Val358 form a helical membrane-spanning segment. Residues Gln359–Ser858 lie on the Cytoplasmic side of the membrane. ATP contacts are provided by residues Trp401, Ser434, Gly458–Thr465, and Gln493. Residues Asn423–Gly646 enclose the ABC transporter 1 domain. Cys524 is lipidated: S-palmitoyl cysteine. Phosphoserine is present on residues Ser549 and Ser660. Residues Ser654–Glu831 form a disordered R region region. Ser670 is modified (phosphoserine; by PKA). Lys688 is covalently cross-linked (Glycyl lysine isopeptide (Lys-Gly) (interchain with G-Cter in ubiquitin)). A phosphoserine mark is found at Ser700 and Ser712. Position 717 is a phosphothreonine (Thr717). A phosphoserine mark is found at Ser737, Ser753, Ser768, Ser790, Ser795, and Ser813. Residues Leu859–Val879 traverse the membrane as a helical segment. One can recognise an ABC transmembrane type-1 2 domain in the interval Leu859 to Ser1155. At Val880 to Ile918 the chain is on the extracellular side. 2 N-linked (GlcNAc...) asparagine glycosylation sites follow: Asn894 and Asn900. A discontinuously helical transmembrane segment spans residues Tyr919 to His939. Residues Thr940–Thr990 are Cytoplasmic-facing. A helical transmembrane segment spans residues Ile991 to Leu1011. Residues Gln1012–Pro1013 are Extracellular-facing. Residues Tyr1014–Leu1034 traverse the membrane as a helical segment. Residues Gln1035–Thr1095 lie on the Cytoplasmic side of the membrane. A helical membrane pass occupies residues Leu1096 to Phe1116. The Extracellular portion of the chain corresponds to Ile1117–Gly1130. Residues Ile1131–Ile1151 form a helical membrane-spanning segment. Residues Asp1152–Leu1480 lie on the Cytoplasmic side of the membrane. In terms of domain architecture, ABC transporter 2 spans Met1210 to Pro1443. ATP-binding positions include Tyr1219 and Gly1244–Ser1251. An interaction with GORASP2 region spans residues Arg1386 to Leu1480. Cys1395 carries S-palmitoyl cysteine lipidation. 2 positions are modified to phosphoserine: Ser1444 and Ser1456. The disordered stretch occupies residues His1452–Leu1480. Positions Glu1470 to Leu1480 are enriched in acidic residues. Positions Thr1478–Leu1480 match the PDZ-binding motif.

This sequence belongs to the ABC transporter superfamily. ABCC family. CFTR transporter (TC 3.A.1.202) subfamily. In terms of assembly, monomer; does not require oligomerization for channel activity. May form oligomers in the membrane. Interacts with SLC26A3, SLC26A6 and NHERF1. Interacts with SHANK2. Interacts with MYO6. Interacts (via C-terminus) with GOPC (via PDZ domain); this promotes CFTR internalization and thereby decreases channel activity. Interacts with SLC4A7 through NHERF1. Found in a complex with MYO5B and RAB11A. Interacts with ANO1. Interacts with SLC26A8. Interacts with AHCYL1; the interaction increases CFTR activity. Interacts with CSE1L. The core-glycosylated form interacts with GORASP2 (via PDZ GRASP-type 1 domain) in respone to ER stress. Interacts with MARCHF2; the interaction leads to CFTR ubiqtuitination and degradation. Interacts with ADGRG2. In terms of processing, N-glycosylated. Phosphorylated; cAMP treatment promotes phosphorylation and activates the channel. Dephosphorylation decreases the ATPase activity (in vitro). Phosphorylation at PKA sites activates the channel. Phosphorylation at PKC sites enhances the response to phosphorylation by PKA. Phosphorylated by AMPK; this inhibits channel activity. Post-translationally, ubiquitinated, leading to its degradation in the lysosome. Deubiquitination by USP10 in early endosomes enhances its endocytic recycling to the cell membrane. Ubiquitinated by RNF185 during ER stress. Ubiquitinated by MARCHF2.

It is found in the apical cell membrane. The protein resides in the early endosome membrane. Its subcellular location is the cell membrane. The protein localises to the recycling endosome membrane. It localises to the endoplasmic reticulum membrane. It is found in the nucleus. The catalysed reaction is ATP + H2O + closed Cl(-) channel = ADP + phosphate + open Cl(-) channel.. It carries out the reaction chloride(in) = chloride(out). It catalyses the reaction hydrogencarbonate(in) = hydrogencarbonate(out). The enzyme catalyses ATP + H2O = ADP + phosphate + H(+). Functionally, epithelial ion channel that plays an important role in the regulation of epithelial ion and water transport and fluid homeostasis. Mediates the transport of chloride ions across the cell membrane. Possesses an intrinsic ATPase activity and utilizes ATP to gate its channel; the passive flow of anions through the channel is gated by cycles of ATP binding and hydrolysis by the ATP-binding domains. The ion channel is also permeable to HCO(3)(-); selectivity depends on the extracellular chloride concentration. Exerts its function also by modulating the activity of other ion channels and transporters. Contributes to the regulation of the pH and the ion content of the epithelial fluid layer. Modulates the activity of the epithelial sodium channel (ENaC) complex, in part by regulating the cell surface expression of the ENaC complex. May regulate bicarbonate secretion and salvage in epithelial cells by regulating the transporter SLC4A7. Can inhibit the chloride channel activity of ANO1. Plays a role in the chloride and bicarbonate homeostasis during sperm epididymal maturation and capacitation. This chain is Cystic fibrosis transmembrane conductance regulator, found in Pongo abelii (Sumatran orangutan).